The chain runs to 78 residues: DNA-directed RNA polymerase subunit Rpo5 (78 aa).

The protein belongs to the archaeal Rpo5/eukaryotic RPB5 RNA polymerase subunit family. As to quaternary structure, part of the RNA polymerase complex.

The protein resides in the cytoplasm. The catalysed reaction is RNA(n) + a ribonucleoside 5'-triphosphate = RNA(n+1) + diphosphate. In terms of biological role, DNA-dependent RNA polymerase (RNAP) catalyzes the transcription of DNA into RNA using the four ribonucleoside triphosphates as substrates. In Methanococcus maripaludis (strain C6 / ATCC BAA-1332), this protein is DNA-directed RNA polymerase subunit Rpo5.